The sequence spans 89 residues: Large ribosomal subunit protein bL27 (89 aa).

The disordered stretch occupies residues 1-21 (MAHKKAGGSSRNGRDSESKRL).

This sequence belongs to the bacterial ribosomal protein bL27 family.

The chain is Large ribosomal subunit protein bL27 from Chelativorans sp. (strain BNC1).